Reading from the N-terminus, the 200-residue chain is Protein GrpE (200 aa).

Residues 1-11 show a composition bias toward polar residues; sequence MSNQTNKAQDN. Residues 1–29 form a disordered region; that stretch reads MSNQTNKAQDNQVEEIVEGELLNENGTEA.

The protein belongs to the GrpE family. In terms of assembly, homodimer.

It is found in the cytoplasm. In terms of biological role, participates actively in the response to hyperosmotic and heat shock by preventing the aggregation of stress-denatured proteins, in association with DnaK and GrpE. It is the nucleotide exchange factor for DnaK and may function as a thermosensor. Unfolded proteins bind initially to DnaJ; upon interaction with the DnaJ-bound protein, DnaK hydrolyzes its bound ATP, resulting in the formation of a stable complex. GrpE releases ADP from DnaK; ATP binding to DnaK triggers the release of the substrate protein, thus completing the reaction cycle. Several rounds of ATP-dependent interactions between DnaJ, DnaK and GrpE are required for fully efficient folding. In Shewanella halifaxensis (strain HAW-EB4), this protein is Protein GrpE.